Reading from the N-terminus, the 465-residue chain is Tyrosine 3-monooxygenase (465 aa).

Positions 294, 299, and 339 each coordinate Fe cation.

Belongs to the biopterin-dependent aromatic amino acid hydroxylase family. The cofactor is Fe(2+).

The protein localises to the cytoplasm. It is found in the perinuclear region. It carries out the reaction (6R)-L-erythro-5,6,7,8-tetrahydrobiopterin + L-tyrosine + O2 = (4aS,6R)-4a-hydroxy-L-erythro-5,6,7,8-tetrahydrobiopterin + L-dopa. Its pathway is catecholamine biosynthesis; dopamine biosynthesis; dopamine from L-tyrosine: step 1/2. The protein is Tyrosine 3-monooxygenase (TH) of Schistosoma mansoni (Blood fluke).